A 606-amino-acid polypeptide reads, in one-letter code: Flagellar WD repeat-containing protein Pf20 (606 aa).

The interval 229 to 250 (PLPGAERSLGGQSTAAAGGGAS) is disordered. WD repeat units lie at residues 324-354 (GHLL…KMWH), 366-396 (GHKD…KIWD), 408-438 (DHKQ…RLWD), 450-480 (GHVD…SVWD), 492-522 (GHQN…KLWD), 534-564 (TGKH…KAYS), and 576-606 (GHED…RLWS).

In terms of assembly, inter-microtubule bridges in flagella.

Its subcellular location is the cell projection. It localises to the cilium. The protein localises to the flagellum. This chain is Flagellar WD repeat-containing protein Pf20 (PF20), found in Chlamydomonas reinhardtii (Chlamydomonas smithii).